We begin with the raw amino-acid sequence, 268 residues long: MAFSISKKAAVAALFSFLVVTCVAGARPGNFSASDFTADPNWEVARATWYGAPTGAGPDDDGGACGFKNTNQYPFSSMTSCGNEPIFKDGKGCGSCYQIRCVNHPACSGNPETVIITDMNYYPVSKYHFDLSGTAFGAMAKPGQNDQLRHAGIIDIQFKRVPCNFPGLKVTFHVEEGSNPVYFAVLVEYEDGDGDVVQVDLMEANSQSWTPMRESWGSIWRLDSNHRLTAPFSLRITNESGKQLVASQVIPANWAPMAVYRSFVQYSS.

A signal peptide spans 1 to 25; it reads MAFSISKKAAVAALFSFLVVTCVAG. The N-linked (GlcNAc...) asparagine glycan is linked to N30. The region spanning 62-168 is the Expansin-like EG45 domain; that stretch reads GGACGFKNTN…KRVPCNFPGL (107 aa). Intrachain disulfides connect C65–C93, C96–C163, and C101–C107. Positions 181-262 constitute an Expansin-like CBD domain; sequence VYFAVLVEYE…NWAPMAVYRS (82 aa). N-linked (GlcNAc...) asparagine glycosylation is present at N238.

This sequence belongs to the expansin family. Expansin B subfamily. Expressed in roots, coleoptiles and internodes.

The protein localises to the secreted. Its subcellular location is the cell wall. It is found in the membrane. Its function is as follows. May cause loosening and extension of plant cell walls by disrupting non-covalent bonding between cellulose microfibrils and matrix glucans. No enzymatic activity has been found. May be required for rapid internodal elongation in deepwater rice during submergence. The chain is Expansin-B3 (EXPB3) from Oryza sativa subsp. japonica (Rice).